The chain runs to 132 residues: Large ribosomal subunit protein uL14 (132 aa).

Belongs to the universal ribosomal protein uL14 family. In terms of assembly, part of the 50S ribosomal subunit. Forms a cluster with proteins L3 and L24e, part of which may contact the 16S rRNA in 2 intersubunit bridges.

In terms of biological role, binds to 23S rRNA. Forms part of two intersubunit bridges in the 70S ribosome. This Methanosarcina acetivorans (strain ATCC 35395 / DSM 2834 / JCM 12185 / C2A) protein is Large ribosomal subunit protein uL14.